Consider the following 94-residue polypeptide: Defensin-like protein 21 (94 aa).

The N-terminal stretch at 1–26 is a signal peptide; sequence MVRTNVVSFVLFAAIVLCIGSIQIDG. 4 cysteine pairs are disulfide-bonded: C41–C92, C51–C79, C65–C88, and C69–C90.

It belongs to the DEFL family.

The protein resides in the secreted. In Arabidopsis thaliana (Mouse-ear cress), this protein is Defensin-like protein 21.